The sequence spans 244 residues: Derlin-2.2 (244 aa).

Over 1 to 21 (MAQAVEEWYKQMPIITRSYLT) the chain is Cytoplasmic. Residues 22-42 (AAVITTVGCSLDIISPYNLYL) traverse the membrane as a helical segment. Residues 43 to 96 (NPTLVVKQYQYWRLVTNFLYFRKMDLDFMFHMFFLARYCKLLEENSFRGKTADF) are Lumenal-facing. A helical transmembrane segment spans residues 97–117 (LYMLLFGASVLTGIVLIGGMI). Topologically, residues 118–121 (PYLS) are cytoplasmic. Residues 122–142 (ASFAKIIFLSNSLTFMMVYVW) traverse the membrane as a helical segment. The Lumenal segment spans residues 143 to 152 (SKQNPYIHMS). Residues 153–173 (FLGLFTFTAAYLPWVLLGFSI) form a helical membrane-spanning segment. Residues 174–244 (LVGASAWVDL…AAPFDEIHQD (71 aa)) are Cytoplasmic-facing.

This sequence belongs to the derlin family.

Its subcellular location is the endoplasmic reticulum membrane. Functionally, may be involved in the degradation process of specific misfolded endoplasmic reticulum (ER) luminal proteins. The sequence is that of Derlin-2.2 (DER2.2) from Arabidopsis thaliana (Mouse-ear cress).